The chain runs to 505 residues: Chemotaxis regulatory protein ChePep (505 aa).

2 disordered regions span residues 154–403 (EPNN…EDIP) and 420–465 (EAVA…SSPL). 5 stretches are compositionally biased toward basic and acidic residues: residues 172 to 263 (EEVK…EKTQ), 289 to 311 (ENKE…EVVT), 337 to 346 (QAHELEKQEI), 359 to 373 (QDKE…KEET), and 386 to 398 (PQEK…HYES). Low complexity predominate over residues 440–451 (TETSKNENNTET).

In terms of assembly, interacts with CheZ; the interaction is essential for each other polar localization.

The protein localises to the cytoplasm. Its function is as follows. Plays an essential role in chemotaxis. Regulates flagellar rotation through the formation of a complex with chemotaxis protein CheZ. Plays a major role in colonization of the stomach. The sequence is that of Chemotaxis regulatory protein ChePep from Helicobacter pylori (strain ATCC 700392 / 26695) (Campylobacter pylori).